Reading from the N-terminus, the 284-residue chain is Pantothenate synthetase (284 aa).

ATP is bound at residue 30-37; that stretch reads MGNLHDGH. Histidine 37 serves as the catalytic Proton donor. Glutamine 61 serves as a coordination point for (R)-pantoate. Beta-alanine is bound at residue glutamine 61. Residue 149–152 participates in ATP binding; it reads GEKD. Residue glutamine 155 participates in (R)-pantoate binding. Residues valine 178 and 186 to 189 contribute to the ATP site; that span reads LSSR.

It belongs to the pantothenate synthetase family. In terms of assembly, homodimer.

Its subcellular location is the cytoplasm. It catalyses the reaction (R)-pantoate + beta-alanine + ATP = (R)-pantothenate + AMP + diphosphate + H(+). The protein operates within cofactor biosynthesis; (R)-pantothenate biosynthesis; (R)-pantothenate from (R)-pantoate and beta-alanine: step 1/1. Its function is as follows. Catalyzes the condensation of pantoate with beta-alanine in an ATP-dependent reaction via a pantoyl-adenylate intermediate. The sequence is that of Pantothenate synthetase from Photorhabdus laumondii subsp. laumondii (strain DSM 15139 / CIP 105565 / TT01) (Photorhabdus luminescens subsp. laumondii).